A 507-amino-acid chain; its full sequence is Transcription factor CP2 (507 aa).

The 240-residue stretch at 61–300 folds into the Grh/CP2 DB domain; sequence ENKILPFQYV…SPGFNSSHNS (240 aa). A DNA-binding region spans residues 133–395; the sequence is EHQQLEGWRW…LFNALKGRMV (263 aa). Disordered stretches follow at residues 240–268 and 296–316; these read PKGADRKQKTDREKMEKRTPQEKEKYQPS and SSHNSFPIGEGNGSPNHQPEP. Over residues 241–265 the composition is skewed to basic and acidic residues; the sequence is KGADRKQKTDREKMEKRTPQEKEKY.

It belongs to the grh/CP2 family. CP2 subfamily. As to quaternary structure, component of the SSP (stage selector protein) complex, which appears to be a heteromer of TFCP2 and 2 copies of NFE4.

The protein localises to the nucleus. Functionally, may function as a transcription factor. This chain is Transcription factor CP2 (tfcp2), found in Xenopus tropicalis (Western clawed frog).